We begin with the raw amino-acid sequence, 216 residues long: ADP-ribosylation factor D (216 aa).

Over residues 188–204 (SKFSFSNKSKQQKSNSQ) the composition is skewed to low complexity. The interval 188–216 (SKFSFSNKSKQQKSNSQPNTPRKNIQMMT) is disordered. Polar residues predominate over residues 205–216 (PNTPRKNIQMMT).

This sequence belongs to the small GTPase superfamily. Arf family.

It localises to the golgi apparatus. Functionally, GTP-binding protein involved in protein trafficking; may modulate vesicle budding and uncoating within the Golgi apparatus. The protein is ADP-ribosylation factor D (arrD) of Dictyostelium discoideum (Social amoeba).